The sequence spans 418 residues: Voltage-gated ClC-type chloride channel ClcB (418 aa).

10 helical membrane-spanning segments follow: residues 5–25 (LLIA…FRHA), 54–74 (LLTP…WQKF), 146–166 (LWIA…PLAG), 168–188 (LFIA…PVII), 222–242 (ALII…LTLM), 258–278 (WQLA…PAVW), 291–311 (APPL…AVLA), 316–336 (GAPG…GMLY), 352–372 (LLLG…APIM), and 380–400 (MTGE…ASVI).

This sequence belongs to the chloride channel (TC 2.A.49) family. ClcB subfamily.

The protein resides in the cell inner membrane. In terms of biological role, probably acts as an electrical shunt for an outwardly-directed proton pump that is linked to amino acid decarboxylation, as part of the extreme acid resistance (XAR) response. This Escherichia coli O127:H6 (strain E2348/69 / EPEC) protein is Voltage-gated ClC-type chloride channel ClcB.